A 217-amino-acid chain; its full sequence is Adenylate kinase (217 aa).

Residue 10 to 15 participates in ATP binding; that stretch reads GAGKGT. Residues 30-59 form an NMP region; that stretch reads STGDIFRKNISDKTPLGIEAKEYLDKGQLV. AMP-binding positions include T31, R36, 57-59, 85-88, and Q92; these read QLV and GFPR. The segment at 126 to 163 is LID; the sequence is GRRICPSCGASYHVKFNPPKLKDKCDICNNDIIQRKDD. ATP is bound at residue R127. Zn(2+) is bound by residues C130 and C133. 136-137 lines the ATP pocket; that stretch reads SY. Zn(2+) is bound by residues C150 and C153. Residues R160 and R171 each coordinate AMP. G199 is an ATP binding site.

The protein belongs to the adenylate kinase family. Monomer.

The protein localises to the cytoplasm. The enzyme catalyses AMP + ATP = 2 ADP. It participates in purine metabolism; AMP biosynthesis via salvage pathway; AMP from ADP: step 1/1. Functionally, catalyzes the reversible transfer of the terminal phosphate group between ATP and AMP. Plays an important role in cellular energy homeostasis and in adenine nucleotide metabolism. In Clostridium kluyveri (strain NBRC 12016), this protein is Adenylate kinase.